The following is a 732-amino-acid chain: Elongation factor 2 (732 aa).

The 242-residue stretch at 19-260 folds into the tr-type G domain; it reads ERIRNMGIAA…MVVKHLPNPL (242 aa). GTP contacts are provided by residues 28 to 35, 94 to 98, and 148 to 151; these read AHIDHGKT, DTPGH, and NKVD. His-597 carries the diphthamide modification.

Belongs to the TRAFAC class translation factor GTPase superfamily. Classic translation factor GTPase family. EF-G/EF-2 subfamily.

The protein localises to the cytoplasm. Catalyzes the GTP-dependent ribosomal translocation step during translation elongation. During this step, the ribosome changes from the pre-translocational (PRE) to the post-translocational (POST) state as the newly formed A-site-bound peptidyl-tRNA and P-site-bound deacylated tRNA move to the P and E sites, respectively. Catalyzes the coordinated movement of the two tRNA molecules, the mRNA and conformational changes in the ribosome. This Thermococcus kodakarensis (strain ATCC BAA-918 / JCM 12380 / KOD1) (Pyrococcus kodakaraensis (strain KOD1)) protein is Elongation factor 2.